A 755-amino-acid chain; its full sequence is Kelch-like protein 5 (755 aa).

The segment at 152 to 184 is disordered; it reads LDRPEVDDGTSEEENESDSSSCRTSNSSQTLSS. Positions 158 to 168 are enriched in acidic residues; the sequence is DDGTSEEENES. The span at 169 to 184 shows a compositional bias: low complexity; the sequence is DSSSCRTSNSSQTLSS. Residues 220–287 form the BTB domain; the sequence is CDVILVAGDR…AYTGRLELKE (68 aa). Kelch repeat units follow at residues 468-514, 515-561, 563-608, 609-655, 657-708, and 709-754; these read TLFA…VLDD, KLYV…VLEG, MYAV…VLSG, KLYA…TWNG, LYAI…LLGD, and KLYA…VTVK.

In terms of tissue distribution, expressed in adrenal gland, ovary and thyroid gland and less abundantly in lymph node, prostate, spinal cord, testis and trachea.

The protein localises to the cytoplasm. It localises to the cytoskeleton. The chain is Kelch-like protein 5 (KLHL5) from Homo sapiens (Human).